The chain runs to 351 residues: Putative glycosyltransferase 45 (351 aa).

Belongs to the glycosyltransferase group 1 family.

This chain is Putative glycosyltransferase 45 (SIFV0045), found in Sulfolobus islandicus filamentous virus (isolate Iceland/Hveragerdi) (SIFV).